The chain runs to 85 residues: Photosystem I reaction center subunit PsaK (85 aa).

2 consecutive transmembrane segments (helical) span residues 12 to 34 (TVTW…IAVG) and 54 to 76 (GGMG…IGAI).

Belongs to the PsaG/PsaK family.

It localises to the cellular thylakoid membrane. The polypeptide is Photosystem I reaction center subunit PsaK (Parasynechococcus marenigrum (strain WH8102)).